Reading from the N-terminus, the 818-residue chain is Phenylalanine--tRNA ligase beta subunit (818 aa).

The 110-residue stretch at 39-148 folds into the tRNA-binding domain; sequence AAELQKFEVA…EDAVVGENFT (110 aa). A B5 domain is found at 423 to 498; it reads SQKKPLDFSA…RIYGYDKIES (76 aa). 4 residues coordinate Mg(2+): Asp476, Asp482, Glu485, and Glu486. The 94-residue stretch at 724 to 817 folds into the FDX-ACB domain; sequence SDFQANFRDY…ISQKFQGTLR (94 aa).

It belongs to the phenylalanyl-tRNA synthetase beta subunit family. Type 1 subfamily. Tetramer of two alpha and two beta subunits. Mg(2+) is required as a cofactor.

It is found in the cytoplasm. It carries out the reaction tRNA(Phe) + L-phenylalanine + ATP = L-phenylalanyl-tRNA(Phe) + AMP + diphosphate + H(+). This Rickettsia conorii (strain ATCC VR-613 / Malish 7) protein is Phenylalanine--tRNA ligase beta subunit.